Consider the following 91-residue polypeptide: Small ribosomal subunit protein uS15 (91 aa).

Belongs to the universal ribosomal protein uS15 family. As to quaternary structure, part of the 30S ribosomal subunit. Forms a bridge to the 50S subunit in the 70S ribosome, contacting the 23S rRNA.

One of the primary rRNA binding proteins, it binds directly to 16S rRNA where it helps nucleate assembly of the platform of the 30S subunit by binding and bridging several RNA helices of the 16S rRNA. Functionally, forms an intersubunit bridge (bridge B4) with the 23S rRNA of the 50S subunit in the ribosome. The protein is Small ribosomal subunit protein uS15 of Deinococcus geothermalis (strain DSM 11300 / CIP 105573 / AG-3a).